A 261-amino-acid chain; its full sequence is uncharacterized protein (261 aa).

Positions 1-22 (MGYLKKVGMCISLLIVIIFVTS) are cleaved as a signal peptide. Cys23 carries the N-palmitoyl cysteine lipid modification. A lipid anchor (S-diacylglycerol cysteine) is attached at Cys23.

This sequence belongs to the staphylococcal tandem lipoprotein family.

The protein localises to the cell membrane. This is an uncharacterized protein from Staphylococcus aureus (strain bovine RF122 / ET3-1).